Consider the following 459-residue polypeptide: Spermidine/putrescine import ATP-binding protein PotA (459 aa).

The region spanning 15–334 (IELIDIVKQF…PRNIWVAKFI (320 aa)) is the ABC transporter domain. 47-54 (GPSGSGKT) contributes to the ATP binding site. Residues 115–203 (RVPKENVKKE…EEFKNKYFKR (89 aa)) are insert.

It belongs to the ABC transporter superfamily. Spermidine/putrescine importer (TC 3.A.1.11.1) family. As to quaternary structure, the complex is composed of two ATP-binding proteins (PotA), two transmembrane proteins (PotB and PotC) and a solute-binding protein (PotD).

It is found in the cell membrane. It catalyses the reaction ATP + H2O + polyamine-[polyamine-binding protein]Side 1 = ADP + phosphate + polyamineSide 2 + [polyamine-binding protein]Side 1.. Its function is as follows. Part of the ABC transporter complex PotABCD involved in spermidine/putrescine import. Responsible for energy coupling to the transport system. The protein is Spermidine/putrescine import ATP-binding protein PotA of Mycoplasmopsis synoviae (strain 53) (Mycoplasma synoviae).